Reading from the N-terminus, the 488-residue chain is Acetyl-coenzyme A carboxylase carboxyl transferase subunit beta, chloroplastic (488 aa).

Residues 224 to 488 (LWIQCDNCYG…FFPLNKNEIK (265 aa)) enclose the CoA carboxyltransferase N-terminal domain. Zn(2+)-binding residues include Cys228, Cys231, Cys244, and Cys247. Residues 228 to 247 (CDNCYGLMYKKVEMNVCEEC) form a C4-type zinc finger.

This sequence belongs to the AccD/PCCB family. Acetyl-CoA carboxylase is a heterohexamer composed of biotin carboxyl carrier protein, biotin carboxylase and 2 subunits each of ACCase subunit alpha and ACCase plastid-coded subunit beta (accD). Zn(2+) serves as cofactor.

Its subcellular location is the plastid. It localises to the chloroplast stroma. It carries out the reaction N(6)-carboxybiotinyl-L-lysyl-[protein] + acetyl-CoA = N(6)-biotinyl-L-lysyl-[protein] + malonyl-CoA. The protein operates within lipid metabolism; malonyl-CoA biosynthesis; malonyl-CoA from acetyl-CoA: step 1/1. In terms of biological role, component of the acetyl coenzyme A carboxylase (ACC) complex. Biotin carboxylase (BC) catalyzes the carboxylation of biotin on its carrier protein (BCCP) and then the CO(2) group is transferred by the transcarboxylase to acetyl-CoA to form malonyl-CoA. This chain is Acetyl-coenzyme A carboxylase carboxyl transferase subunit beta, chloroplastic, found in Arabis hirsuta (Hairy rock-cress).